We begin with the raw amino-acid sequence, 308 residues long: Methionyl-tRNA formyltransferase (308 aa).

110 to 113 (SLLP) serves as a coordination point for (6S)-5,6,7,8-tetrahydrofolate.

Belongs to the Fmt family.

The catalysed reaction is L-methionyl-tRNA(fMet) + (6R)-10-formyltetrahydrofolate = N-formyl-L-methionyl-tRNA(fMet) + (6S)-5,6,7,8-tetrahydrofolate + H(+). Its function is as follows. Attaches a formyl group to the free amino group of methionyl-tRNA(fMet). The formyl group appears to play a dual role in the initiator identity of N-formylmethionyl-tRNA by promoting its recognition by IF2 and preventing the misappropriation of this tRNA by the elongation apparatus. This chain is Methionyl-tRNA formyltransferase, found in Neisseria meningitidis serogroup A / serotype 4A (strain DSM 15465 / Z2491).